Here is a 176-residue protein sequence, read N- to C-terminus: Dual-action ribosomal maturation protein DarP (176 aa).

The span at 1–10 (MTVPNHQQDI) shows a compositional bias: polar residues. Residues 1-22 (MTVPNHQQDISDSDLESRPSKT) form a disordered region.

This sequence belongs to the DarP family.

It is found in the cytoplasm. Functionally, member of a network of 50S ribosomal subunit biogenesis factors which assembles along the 30S-50S interface, preventing incorrect 23S rRNA structures from forming. Promotes peptidyl transferase center (PTC) maturation. The protein is Dual-action ribosomal maturation protein DarP of Nitrosomonas eutropha (strain DSM 101675 / C91 / Nm57).